The following is a 380-amino-acid chain: 4-hydroxy-3-methylbut-2-en-1-yl diphosphate synthase (flavodoxin) (380 aa).

[4Fe-4S] cluster contacts are provided by Cys279, Cys282, Cys314, and Glu321.

It belongs to the IspG family. It depends on [4Fe-4S] cluster as a cofactor.

It carries out the reaction (2E)-4-hydroxy-3-methylbut-2-enyl diphosphate + oxidized [flavodoxin] + H2O + 2 H(+) = 2-C-methyl-D-erythritol 2,4-cyclic diphosphate + reduced [flavodoxin]. It functions in the pathway isoprenoid biosynthesis; isopentenyl diphosphate biosynthesis via DXP pathway; isopentenyl diphosphate from 1-deoxy-D-xylulose 5-phosphate: step 5/6. In terms of biological role, converts 2C-methyl-D-erythritol 2,4-cyclodiphosphate (ME-2,4cPP) into 1-hydroxy-2-methyl-2-(E)-butenyl 4-diphosphate. The protein is 4-hydroxy-3-methylbut-2-en-1-yl diphosphate synthase (flavodoxin) of Tropheryma whipplei (strain TW08/27) (Whipple's bacillus).